A 182-amino-acid chain; its full sequence is Meiotically up-regulated gene 82 protein (182 aa).

Residues Glu-161–Asp-182 are disordered. Positions Tyr-169–Asp-182 are enriched in basic residues.

It belongs to the prokaryotic/mitochondrial release factor family.

It localises to the mitochondrion. Has a role in meiosis. The polypeptide is Meiotically up-regulated gene 82 protein (mug82) (Schizosaccharomyces pombe (strain 972 / ATCC 24843) (Fission yeast)).